The sequence spans 178 residues: Ribosome maturation factor RimP (178 aa).

Belongs to the RimP family.

It localises to the cytoplasm. In terms of biological role, required for maturation of 30S ribosomal subunits. This Streptococcus pyogenes serotype M1 protein is Ribosome maturation factor RimP.